The sequence spans 308 residues: MQLVPLELNRSTLSGISGSISISCWIIVFVPQIYENFYRKSSDGLSLLFVVLWLAGDVFNLMGAVMQHLLSTMIILAAYYTVADIILLGQCLWYDNEEKPAVDPIHLSPANPINENVLHDVFNEQQPLLNSQGQPNRIDEEMAAPSSDGNAGDDNLREVNSRNLIKDIFIVSGVVFVGFISWYVTYCVNYTQPPPVEDPSLPVPELQINWMAQIFGYLSALLYLGSRIPQILLNFKRKSCEGISFLFFLFACLGNTTFIFSVIVISLDWKYLIMNASWLVGSIGTLFMDFVIFSQFFIYKRNKKFILN.

The Vacuolar segment spans residues 1 to 12 (MQLVPLELNRST). N-linked (GlcNAc...) asparagine glycosylation is present at asparagine 9. One can recognise a PQ-loop 1 domain in the interval 10–76 (RSTLSGISGS…QHLLSTMIIL (67 aa)). Residues 13–33 (LSGISGSISISCWIIVFVPQI) form a helical membrane-spanning segment. Over 34–44 (YENFYRKSSDG) the chain is Cytoplasmic. The chain crosses the membrane as a helical span at residues 45–65 (LSLLFVVLWLAGDVFNLMGAV). The Vacuolar portion of the chain corresponds to 66-68 (MQH). A helical membrane pass occupies residues 69–89 (LLSTMIILAAYYTVADIILLG). At 90-167 (QCLWYDNEEK…EVNSRNLIKD (78 aa)) the chain is on the cytoplasmic side. A helical transmembrane segment spans residues 168 to 188 (IFIVSGVVFVGFISWYVTYCV). An N-linked (GlcNAc...) asparagine glycan is attached at asparagine 189. Residues 189–205 (NYTQPPPVEDPSLPVPE) lie on the Vacuolar side of the membrane. The helical transmembrane segment at 206–226 (LQINWMAQIFGYLSALLYLGS) threads the bilayer. One can recognise a PQ-loop 2 domain in the interval 211–274 (MAQIFGYLSA…ISLDWKYLIM (64 aa)). The Cytoplasmic portion of the chain corresponds to 227–244 (RIPQILLNFKRKSCEGIS). The helical transmembrane segment at 245–265 (FLFFLFACLGNTTFIFSVIVI) threads the bilayer. Topologically, residues 266–277 (SLDWKYLIMNAS) are vacuolar. Asparagine 275 carries N-linked (GlcNAc...) asparagine glycosylation. The helical transmembrane segment at 278–298 (WLVGSIGTLFMDFVIFSQFFI) threads the bilayer. The Cytoplasmic segment spans residues 299–308 (YKRNKKFILN).

Belongs to the laat-1 family.

It localises to the vacuole membrane. In terms of biological role, amino acid transporter that moves lysine into the vacuole. May also contribute to low affinity arginine import into the vacuole. Has also been suggested to mediate export of cationic amino acids from the vacuole. May function as an amino acid/proton antiporter. In Saccharomyces cerevisiae (strain ATCC 204508 / S288c) (Baker's yeast), this protein is Vacuolar lysine transporter YPQ1 (YPQ1).